Here is a 188-residue protein sequence, read N- to C-terminus: Elongation factor P (188 aa).

It belongs to the elongation factor P family.

It is found in the cytoplasm. It functions in the pathway protein biosynthesis; polypeptide chain elongation. Its function is as follows. Involved in peptide bond synthesis. Stimulates efficient translation and peptide-bond synthesis on native or reconstituted 70S ribosomes in vitro. Probably functions indirectly by altering the affinity of the ribosome for aminoacyl-tRNA, thus increasing their reactivity as acceptors for peptidyl transferase. The polypeptide is Elongation factor P (Chlorobium chlorochromatii (strain CaD3)).